Reading from the N-terminus, the 264-residue chain is uncharacterized protein (264 aa).

The next 4 membrane-spanning stretches (helical) occupy residues 43–63 (VVAA…LYLI), 68–88 (FLPS…LLGI), 96–116 (ILPA…LGCI), and 150–170 (LAAK…VLAV). The tract at residues 216 to 247 (SYEDALKNSSQQPSTSSSSSSPPSRPPHSVYT) is disordered. Residues 224-237 (SSQQPSTSSSSSSP) show a composition bias toward low complexity.

The protein localises to the membrane. This is an uncharacterized protein from Caenorhabditis elegans.